The primary structure comprises 308 residues: Polyprenyl-phosphate transporter (308 aa).

8 consecutive transmembrane segments (helical) span residues 15 to 35 (GLAM…IAFI), 69 to 89 (INGL…ATLA), 91 to 111 (LISW…FGLI), 130 to 150 (LLWL…KPLH), 163 to 183 (AIAI…LLLI), 200 to 220 (ILLI…HILS), 228 to 248 (DVTL…IWPW), and 282 to 302 (PSQW…VLGL).

The protein belongs to the PopT family.

The protein resides in the cell inner membrane. Its activity is regulated as follows. Active in alkaline conditions. In terms of biological role, flippase that catalyzes the transport of undecaprenyl phosphate (UndP) across the cytoplasmic membrane, from the external side to the cytoplasmic side. Is involved in UndP recycling during peptidoglycan synthesis. Required for cell shape maintenance at alkaline pH and peptidoglycan maintenance. Required by the cholera pathogen for growth and cell shape maintenance in the intestine. This Vibrio cholerae serotype O1 (strain ATCC 39315 / El Tor Inaba N16961) protein is Polyprenyl-phosphate transporter.